The chain runs to 261 residues: Cytochrome c oxidase subunit 3 (261 aa).

Over 1 to 15 (MTHQTHAYHMVDPSP) the chain is Mitochondrial matrix. The helical transmembrane segment at 16-34 (WPLTGALSALLMTSGLTMW) threads the bilayer. Residues 35 to 40 (FHYHSV) are Mitochondrial intermembrane-facing. Residues 41 to 66 (VLLFLGLMTNTLTMFQWWRDVVREGT) traverse the membrane as a helical segment. Over 67–72 (FQGHHT) the chain is Mitochondrial matrix. The chain crosses the membrane as a helical span at residues 73–105 (PVVQEGLRYGMILFITSEVLFFTGFFWAFYHSS). Topologically, residues 106–128 (LAPTPELGSYWPPVGVYPLNPLE) are mitochondrial intermembrane. Residues 129–152 (VPLLNTSVLLASGVTITWAHHSLM) traverse the membrane as a helical segment. At 153 to 155 (EGN) the chain is on the mitochondrial matrix side. The chain crosses the membrane as a helical span at residues 156 to 183 (RKNMLQALLITILLGVYFTLLQMFEYYE). Residues 184 to 190 (ASFTISD) are Mitochondrial intermembrane-facing. The chain crosses the membrane as a helical span at residues 191 to 223 (GIYGSTFFVTTGFHGLHVIIGSTFLLTCFIRQL). Over 224-232 (KFHFTSNHH) the chain is Mitochondrial matrix. The chain crosses the membrane as a helical span at residues 233 to 256 (FGFEAAAWYWHFVDVVWLFLYLSI). Over 257 to 261 (YWWGS) the chain is Mitochondrial intermembrane.

The protein belongs to the cytochrome c oxidase subunit 3 family. Component of the cytochrome c oxidase (complex IV, CIV), a multisubunit enzyme composed of 14 subunits. The complex is composed of a catalytic core of 3 subunits MT-CO1, MT-CO2 and MT-CO3, encoded in the mitochondrial DNA, and 11 supernumerary subunits COX4I, COX5A, COX5B, COX6A, COX6B, COX6C, COX7A, COX7B, COX7C, COX8 and NDUFA4, which are encoded in the nuclear genome. The complex exists as a monomer or a dimer and forms supercomplexes (SCs) in the inner mitochondrial membrane with NADH-ubiquinone oxidoreductase (complex I, CI) and ubiquinol-cytochrome c oxidoreductase (cytochrome b-c1 complex, complex III, CIII), resulting in different assemblies (supercomplex SCI(1)III(2)IV(1) and megacomplex MCI(2)III(2)IV(2)).

It is found in the mitochondrion inner membrane. It carries out the reaction 4 Fe(II)-[cytochrome c] + O2 + 8 H(+)(in) = 4 Fe(III)-[cytochrome c] + 2 H2O + 4 H(+)(out). In terms of biological role, component of the cytochrome c oxidase, the last enzyme in the mitochondrial electron transport chain which drives oxidative phosphorylation. The respiratory chain contains 3 multisubunit complexes succinate dehydrogenase (complex II, CII), ubiquinol-cytochrome c oxidoreductase (cytochrome b-c1 complex, complex III, CIII) and cytochrome c oxidase (complex IV, CIV), that cooperate to transfer electrons derived from NADH and succinate to molecular oxygen, creating an electrochemical gradient over the inner membrane that drives transmembrane transport and the ATP synthase. Cytochrome c oxidase is the component of the respiratory chain that catalyzes the reduction of oxygen to water. Electrons originating from reduced cytochrome c in the intermembrane space (IMS) are transferred via the dinuclear copper A center (CU(A)) of subunit 2 and heme A of subunit 1 to the active site in subunit 1, a binuclear center (BNC) formed by heme A3 and copper B (CU(B)). The BNC reduces molecular oxygen to 2 water molecules using 4 electrons from cytochrome c in the IMS and 4 protons from the mitochondrial matrix. The chain is Cytochrome c oxidase subunit 3 (MT-CO3) from Mammuthus primigenius (Siberian woolly mammoth).